Reading from the N-terminus, the 391-residue chain is Phosphoglycerate kinase (391 aa).

Residues 21–23 (DLN), Arg36, 59–62 (HLGR), Arg113, and Arg146 each bind substrate. Residues Lys197, Glu319, and 345–348 (GGDT) contribute to the ATP site.

This sequence belongs to the phosphoglycerate kinase family. In terms of assembly, monomer.

It localises to the cytoplasm. It carries out the reaction (2R)-3-phosphoglycerate + ATP = (2R)-3-phospho-glyceroyl phosphate + ADP. The protein operates within carbohydrate degradation; glycolysis; pyruvate from D-glyceraldehyde 3-phosphate: step 2/5. In Pseudoalteromonas translucida (strain TAC 125), this protein is Phosphoglycerate kinase.